The sequence spans 1389 residues: DNA-directed RNA polymerase subunit beta'' (1389 aa).

The Zn(2+) site is built by Cys224, Cys295, Cys302, and Cys305.

Belongs to the RNA polymerase beta' chain family. RpoC2 subfamily. In terms of assembly, in plastids the minimal PEP RNA polymerase catalytic core is composed of four subunits: alpha, beta, beta', and beta''. When a (nuclear-encoded) sigma factor is associated with the core the holoenzyme is formed, which can initiate transcription. Zn(2+) is required as a cofactor.

The protein localises to the plastid. The protein resides in the chloroplast. It carries out the reaction RNA(n) + a ribonucleoside 5'-triphosphate = RNA(n+1) + diphosphate. In terms of biological role, DNA-dependent RNA polymerase catalyzes the transcription of DNA into RNA using the four ribonucleoside triphosphates as substrates. In Morus indica (Mulberry), this protein is DNA-directed RNA polymerase subunit beta''.